The chain runs to 205 residues: Histidine biosynthesis bifunctional protein HisIE (205 aa).

A phosphoribosyl-AMP cyclohydrolase region spans residues 1–116 (MLKLKFNEEG…KVEKPLPFEV (116 aa)). The interval 117 to 205 (LPRLQDVIRE…VMEELIRRFK (89 aa)) is phosphoribosyl-ATP pyrophosphohydrolase.

This sequence in the N-terminal section; belongs to the PRA-CH family. It in the C-terminal section; belongs to the PRA-PH family.

It is found in the cytoplasm. It carries out the reaction 1-(5-phospho-beta-D-ribosyl)-ATP + H2O = 1-(5-phospho-beta-D-ribosyl)-5'-AMP + diphosphate + H(+). It catalyses the reaction 1-(5-phospho-beta-D-ribosyl)-5'-AMP + H2O = 1-(5-phospho-beta-D-ribosyl)-5-[(5-phospho-beta-D-ribosylamino)methylideneamino]imidazole-4-carboxamide. It functions in the pathway amino-acid biosynthesis; L-histidine biosynthesis; L-histidine from 5-phospho-alpha-D-ribose 1-diphosphate: step 2/9. It participates in amino-acid biosynthesis; L-histidine biosynthesis; L-histidine from 5-phospho-alpha-D-ribose 1-diphosphate: step 3/9. This is Histidine biosynthesis bifunctional protein HisIE (hisI) from Aquifex aeolicus (strain VF5).